The sequence spans 216 residues: Gamma-glutamylcyclotransferase 2-1 (216 aa).

5-10 lines the substrate pocket; that stretch reads VFGYGS. The active-site Proton acceptor is E87.

Belongs to the gamma-glutamylcyclotransferase family. The cofactor is Mn(2+). Expressed in the central vascular bundle of roots, leaf veins, hydathodes, cauline leaves, shoot apex, sepal veins, flower receptacles and developing seeds.

It localises to the cytoplasm. The catalysed reaction is an alpha-(gamma-L-glutamyl)-L-amino acid = 5-oxo-L-proline + an L-alpha-amino acid. Functionally, catalyzes the formation of 5-oxoproline from gamma-glutamyl dipeptides and plays a significant role in glutathione (GSH) homeostasis. Converts both GSH and gamma-glutamyl-L-alanine to 5-oxoproline in vitro. Plays a role in detoxification of heavy metals and metalloids by recycling glutamate and maintaining GSH homeostasis. This is Gamma-glutamylcyclotransferase 2-1 from Arabidopsis thaliana (Mouse-ear cress).